A 465-amino-acid polypeptide reads, in one-letter code: Ribulose bisphosphate carboxylase large chain (465 aa).

An N6,N6,N6-trimethyllysine modification is found at Lys4. Positions 113 and 163 each coordinate substrate. Lys165 acts as the Proton acceptor in catalysis. Residue Lys167 coordinates substrate. 3 residues coordinate Mg(2+): Lys191, Asp193, and Glu194. Lys191 is modified (N6-carboxylysine). Residue His284 is the Proton acceptor of the active site. The substrate site is built by Arg285, His317, and Ser369.

Belongs to the RuBisCO large chain family. Type I subfamily. Heterohexadecamer of 8 large chains and 8 small chains; disulfide-linked. The disulfide link is formed within the large subunit homodimers. Mg(2+) is required as a cofactor. Post-translationally, the disulfide bond which can form in the large chain dimeric partners within the hexadecamer appears to be associated with oxidative stress and protein turnover.

It is found in the plastid. It localises to the chloroplast. It catalyses the reaction 2 (2R)-3-phosphoglycerate + 2 H(+) = D-ribulose 1,5-bisphosphate + CO2 + H2O. The catalysed reaction is D-ribulose 1,5-bisphosphate + O2 = 2-phosphoglycolate + (2R)-3-phosphoglycerate + 2 H(+). In terms of biological role, ruBisCO catalyzes two reactions: the carboxylation of D-ribulose 1,5-bisphosphate, the primary event in carbon dioxide fixation, as well as the oxidative fragmentation of the pentose substrate in the photorespiration process. Both reactions occur simultaneously and in competition at the same active site. This chain is Ribulose bisphosphate carboxylase large chain, found in Dillenia indica (Elephant apple).